Here is a 338-residue protein sequence, read N- to C-terminus: 26S proteasome non-ATPase regulatory subunit 7 (338 aa).

An MPN domain is found at 11–147 (VIVHPLVLLS…TEAYISVEEV (137 aa)). Positions 286–338 (RDAEEGKSDSKEAKEKNKDSKDKDNKETKDKDGKKAEEKADKGKDEGGKGSRK) are disordered.

The protein belongs to the peptidase M67A family.

In terms of biological role, acts as a regulatory subunit of the 26S proteasome which is involved in the ATP-dependent degradation of ubiquitinated proteins. This is 26S proteasome non-ATPase regulatory subunit 7 (Rpn8) from Drosophila melanogaster (Fruit fly).